The following is a 115-amino-acid chain: uncharacterized protein (115 aa).

A signal peptide spans 1–29; that stretch reads MKKAMAILAVLAAAAVICGLLFFHNDVTD.

This is an uncharacterized protein from Bacillus subtilis (strain 168).